A 368-amino-acid chain; its full sequence is Phosphoserine aminotransferase (368 aa).

Position 44 (Arg44) interacts with L-glutamate. Pyridoxal 5'-phosphate-binding positions include Ala78–Thr79, Trp104, Thr157, Asp179, and Gln202. Lys203 carries the post-translational modification N6-(pyridoxal phosphate)lysine. Asn244–Thr245 is a pyridoxal 5'-phosphate binding site.

Belongs to the class-V pyridoxal-phosphate-dependent aminotransferase family. SerC subfamily. As to quaternary structure, homodimer. Pyridoxal 5'-phosphate is required as a cofactor.

It is found in the cytoplasm. It carries out the reaction O-phospho-L-serine + 2-oxoglutarate = 3-phosphooxypyruvate + L-glutamate. The catalysed reaction is 4-(phosphooxy)-L-threonine + 2-oxoglutarate = (R)-3-hydroxy-2-oxo-4-phosphooxybutanoate + L-glutamate. It functions in the pathway amino-acid biosynthesis; L-serine biosynthesis; L-serine from 3-phospho-D-glycerate: step 2/3. It participates in cofactor biosynthesis; pyridoxine 5'-phosphate biosynthesis; pyridoxine 5'-phosphate from D-erythrose 4-phosphate: step 3/5. Functionally, catalyzes the reversible conversion of 3-phosphohydroxypyruvate to phosphoserine and of 3-hydroxy-2-oxo-4-phosphonooxybutanoate to phosphohydroxythreonine. The polypeptide is Phosphoserine aminotransferase (Neisseria meningitidis serogroup A / serotype 4A (strain DSM 15465 / Z2491)).